Consider the following 344-residue polypeptide: DNA-directed RNA polymerase subunit alpha (344 aa).

The alpha N-terminal domain (alpha-NTD) stretch occupies residues 1-239 (MADHWNKLTR…DQLQSFISFD (239 aa)). The tract at residues 254–344 (VLPYDHNLLR…ENLSKQYSED (91 aa)) is alpha C-terminal domain (alpha-CTD).

Belongs to the RNA polymerase alpha chain family. In terms of assembly, homodimer. The RNAP catalytic core consists of 2 alpha, 1 beta, 1 beta' and 1 omega subunit. When a sigma factor is associated with the core the holoenzyme is formed, which can initiate transcription.

It carries out the reaction RNA(n) + a ribonucleoside 5'-triphosphate = RNA(n+1) + diphosphate. In terms of biological role, DNA-dependent RNA polymerase catalyzes the transcription of DNA into RNA using the four ribonucleoside triphosphates as substrates. The polypeptide is DNA-directed RNA polymerase subunit alpha (Anaplasma phagocytophilum (strain HZ)).